The chain runs to 392 residues: Small ribosomal subunit protein uS9m (392 aa).

Residues 8 to 25 are compositionally biased toward low complexity; the sequence is RSSRAMSSASPASASDSD. Residues 8 to 27 are disordered; it reads RSSRAMSSASPASASDSDTS.

This sequence belongs to the universal ribosomal protein uS9 family. In terms of assembly, component of the mitochondrial ribosome small subunit (28S) which comprises a 12S rRNA and about 30 distinct proteins.

Its subcellular location is the mitochondrion. This is Small ribosomal subunit protein uS9m (mrps-9) from Caenorhabditis elegans.